A 285-amino-acid polypeptide reads, in one-letter code: Ret finger protein-like 4A (285 aa).

Residues cysteine 11–serine 53 form an RING-type; degenerate zinc finger. One can recognise a B30.2/SPRY domain in the interval glutamate 78–serine 276.

As to quaternary structure, interacts with PSMB1, UBE2A and CCNB1.

It is found in the cytoplasm. It localises to the nucleus. This chain is Ret finger protein-like 4A (Rfpl4a), found in Rattus norvegicus (Rat).